A 277-amino-acid chain; its full sequence is 3-methyl-2-oxobutanoate hydroxymethyltransferase (277 aa).

Mg(2+)-binding residues include Asp49 and Asp88. 3-methyl-2-oxobutanoate-binding positions include 49 to 50 (DS), Asp88, and Lys118. Glu120 contributes to the Mg(2+) binding site. Glu186 functions as the Proton acceptor in the catalytic mechanism.

It belongs to the PanB family. Homodecamer; pentamer of dimers. Mg(2+) is required as a cofactor.

The protein localises to the cytoplasm. It carries out the reaction 3-methyl-2-oxobutanoate + (6R)-5,10-methylene-5,6,7,8-tetrahydrofolate + H2O = 2-dehydropantoate + (6S)-5,6,7,8-tetrahydrofolate. It participates in cofactor biosynthesis; (R)-pantothenate biosynthesis; (R)-pantoate from 3-methyl-2-oxobutanoate: step 1/2. In terms of biological role, catalyzes the reversible reaction in which hydroxymethyl group from 5,10-methylenetetrahydrofolate is transferred onto alpha-ketoisovalerate to form ketopantoate. This chain is 3-methyl-2-oxobutanoate hydroxymethyltransferase, found in Cereibacter sphaeroides (strain ATCC 17025 / ATH 2.4.3) (Rhodobacter sphaeroides).